The sequence spans 370 residues: Probable aspartic-type endopeptidase ARB_04018 (370 aa).

The N-terminal stretch at 1 to 21 is a signal peptide; it reads MWHSPFSTAFTLFLGFFTLTL. Residues Asn-80 and Asn-102 are each glycosylated (N-linked (GlcNAc...) asparagine). Residues 94–367 enclose the Peptidase A1 domain; that stretch reads FVNEITIGND…DHDGPKMGFA (274 aa). Residue Asp-110 is part of the active site. N-linked (GlcNAc...) asparagine glycosylation occurs at Asn-251. The active site involves Asp-261. Asn-298 carries N-linked (GlcNAc...) asparagine glycosylation.

It belongs to the peptidase A1 family.

The protein localises to the secreted. Probable aspartic-type endopeptidase which contributes to virulence. The sequence is that of Probable aspartic-type endopeptidase ARB_04018 from Arthroderma benhamiae (strain ATCC MYA-4681 / CBS 112371) (Trichophyton mentagrophytes).